We begin with the raw amino-acid sequence, 239 residues long: Geranylgeranylglyceryl phosphate synthase (239 aa).

The Mg(2+) site is built by Asp18 and Ser45. Residues 166 to 172, 197 to 198, and 219 to 220 contribute to the sn-glycerol 1-phosphate site; these read YLEAGSG, GG, and GT.

It belongs to the GGGP/HepGP synthase family. Group II subfamily. The cofactor is Mg(2+).

The protein resides in the cytoplasm. The catalysed reaction is sn-glycerol 1-phosphate + (2E,6E,10E)-geranylgeranyl diphosphate = sn-3-O-(geranylgeranyl)glycerol 1-phosphate + diphosphate. It participates in membrane lipid metabolism; glycerophospholipid metabolism. Functionally, prenyltransferase that catalyzes the transfer of the geranylgeranyl moiety of geranylgeranyl diphosphate (GGPP) to the C3 hydroxyl of sn-glycerol-1-phosphate (G1P). This reaction is the first ether-bond-formation step in the biosynthesis of archaeal membrane lipids. This Pyrobaculum aerophilum (strain ATCC 51768 / DSM 7523 / JCM 9630 / CIP 104966 / NBRC 100827 / IM2) protein is Geranylgeranylglyceryl phosphate synthase.